We begin with the raw amino-acid sequence, 305 residues long: UDP-3-O-acyl-N-acetylglucosamine deacetylase (305 aa).

Zn(2+)-binding residues include His79, His238, and Asp242. His265 functions as the Proton donor in the catalytic mechanism.

It belongs to the LpxC family. Zn(2+) serves as cofactor.

The catalysed reaction is a UDP-3-O-[(3R)-3-hydroxyacyl]-N-acetyl-alpha-D-glucosamine + H2O = a UDP-3-O-[(3R)-3-hydroxyacyl]-alpha-D-glucosamine + acetate. Its pathway is glycolipid biosynthesis; lipid IV(A) biosynthesis; lipid IV(A) from (3R)-3-hydroxytetradecanoyl-[acyl-carrier-protein] and UDP-N-acetyl-alpha-D-glucosamine: step 2/6. Catalyzes the hydrolysis of UDP-3-O-myristoyl-N-acetylglucosamine to form UDP-3-O-myristoylglucosamine and acetate, the committed step in lipid A biosynthesis. The sequence is that of UDP-3-O-acyl-N-acetylglucosamine deacetylase from Sodalis glossinidius (strain morsitans).